A 189-amino-acid chain; its full sequence is Large ribosomal subunit protein bL9 (189 aa).

Belongs to the bacterial ribosomal protein bL9 family.

Functionally, binds to the 23S rRNA. The polypeptide is Large ribosomal subunit protein bL9 (Brucella abortus (strain S19)).